Reading from the N-terminus, the 499-residue chain is Probable folate-biopterin transporter 2 (499 aa).

A run of 12 helical transmembrane segments spans residues Trp-43–Leu-63, Ile-92–Phe-112, Pro-116–Ser-136, Tyr-141–Ile-161, Leu-185–Val-205, Gly-209–Ser-229, Leu-266–Phe-286, Phe-302–Leu-322, Leu-330–Phe-350, Leu-354–Ile-374, Phe-399–Ile-419, and Trp-435–Val-455.

The protein belongs to the major facilitator superfamily. Folate-biopterin transporter (TC 2.A.71) family.

The protein localises to the membrane. Functionally, could mediate folate transport. The polypeptide is Probable folate-biopterin transporter 2 (Arabidopsis thaliana (Mouse-ear cress)).